Here is a 445-residue protein sequence, read N- to C-terminus: Glucose-6-phosphate isomerase (445 aa).

E284 functions as the Proton donor in the catalytic mechanism. Residues H305 and K419 contribute to the active site.

This sequence belongs to the GPI family.

Its subcellular location is the cytoplasm. The enzyme catalyses alpha-D-glucose 6-phosphate = beta-D-fructose 6-phosphate. It functions in the pathway carbohydrate biosynthesis; gluconeogenesis. The protein operates within carbohydrate degradation; glycolysis; D-glyceraldehyde 3-phosphate and glycerone phosphate from D-glucose: step 2/4. Catalyzes the reversible isomerization of glucose-6-phosphate to fructose-6-phosphate. The sequence is that of Glucose-6-phosphate isomerase from Leptospira borgpetersenii serovar Hardjo-bovis (strain JB197).